Reading from the N-terminus, the 1170-residue chain is Glucose transport transcription regulator RGT1 (1170 aa).

A compositionally biased stretch (polar residues) spans 1–22; the sequence is MNELNTVSTNSSDSTKNGGTSN. A disordered region spans residues 1–46; sequence MNELNTVSTNSSDSTKNGGTSNSPDDMDSAAAASHAIKKRTKASRA. A DNA-binding region (zn(2)-C6 fungal-type) is located at residues 47-76; sequence CDQCRKKKIKCDYKDEKGVCSNCQRNGDRC. Residues 77-148 are disordered; the sequence is SFDRVPLKRG…VPSTPSRSNS (72 aa). A compositionally biased stretch (basic and acidic residues) spans 99-108; sequence RTNEIQDHNN. Low complexity predominate over residues 113-138; the sequence is NTFDNSNNTLNNNTGNSGDNGINSNT. Over residues 139–148 the composition is skewed to polar residues; the sequence is VPSTPSRSNS. Phosphoserine occurs at positions 202, 205, 208, and 229. Residues 217–234 are compositionally biased toward polar residues; the sequence is PNEQLSYNTVQQSPITNK. 6 disordered regions span residues 217-254, 269-288, 293-343, 384-506, 725-757, and 946-974; these read PNEQ…SASG, APTD…IPSL, SNSL…PSIS, AQQT…HPMT, DEEA…NSPN, and RPPN…GNLN. Positions 239 to 250 are enriched in low complexity; it reads SGNANGSVTGSG. Residues 271 to 280 show a composition bias toward basic and acidic residues; it reads TDDHNGEQTR. A phosphoserine mark is found at Ser-283 and Ser-284. 3 stretches are compositionally biased toward low complexity: residues 293-302, 309-341, and 385-397; these read SNSLLLGGQP, QQSQ…YNPS, and QQTQ…QVPQ. Phosphoserine is present on residues Ser-410 and Ser-414. The segment covering 411 to 422 has biased composition (polar residues); it reads APVSVTLSTDRL. The segment covering 424 to 444 has biased composition (low complexity); the sequence is GNENNNGEINNNNGSNNSGSS. Polar residues predominate over residues 445–457; that stretch reads KDTSQHSQESVTT. A compositionally biased stretch (basic residues) spans 473 to 488; the sequence is STKKRRKSYVSKKTKP. The span at 493 to 506 shows a compositional bias: polar residues; the sequence is SISITSKDSAHPMT. A Phosphoserine modification is found at Ser-1130.

Belongs to the EDS1/RGT1 family. Post-translationally, glucose-induced phosphorylation regulates the DNA-binding activity. Hyperphosphorylation in cells growing on high levels of glucose does prevents DNA-binding and dephosphorylation restores DNA-binding ability.

The protein localises to the nucleus. Its subcellular location is the cytoplasm. Glucose-responsive transcription factor that regulates expression of several glucose transporter (HXT) genes in response to glucose. In the absence of glucose, it functions as a transcriptional repressor, whereas high concentrations of glucose cause it to function as a transcriptional activator. In cells growing on low levels of glucose, has a neutral role, neither repressing nor activating transcription. Binds the consensus binding site sequence 5'-CGGANNA-3', of which multiple copies are present in all HXT promoters regulated by RGT1. The chain is Glucose transport transcription regulator RGT1 (RGT1) from Saccharomyces cerevisiae (strain YJM789) (Baker's yeast).